Consider the following 476-residue polypeptide: F-box protein At5g07670 (476 aa).

Residues 59-111 form the F-box domain; it reads PDFTLLLPDLILIRVIQKIPNSQRKNLSLVCKRWFRLHGRLVRSFKVSDWEFL.

This Arabidopsis thaliana (Mouse-ear cress) protein is F-box protein At5g07670.